Here is a 649-residue protein sequence, read N- to C-terminus: MNHRRSKFARIDSMGVDGKLKSVRGRLKKVYGKMKTLENWRKTVLLACVVALAIDPLFLFIPLIDSQRFCFTFDKTLVAVVCVIRTFIDTFYVIHIIYYLITETIAPRSQASLRGEIVVHSKATLKTRLLFHFIVDIISVLPIPQVVVLTLIPLSASLVSERILKWIILSQYVPRIIRMYPLYKEVTRAFGTVAESKWAGAALNLFLYMLHSYVFGAFWYLSSIERKSKCWRAACARTSDCNLTVTDLLCKRAGSDNIRFLNTSCPLIDPAQITNSTDFDFGMYIDALKSGVLEVKPKDFPRKFVYCFWWGLRNISALGQNLETSNSAGEIFFAIIICVSGLLLFAVLIGNVQKYLQSSTTRVDEMEEKRRDTEKWMSYRVIPEYLKERIRRFEDYKWRETKGTEEEALLRSLPKDLRLETKRYLYLDMLKRVPWLNIMDDGWLLEAVCDRVKSVFYLANSFIVREGHPVEEMLIVTRGKLKSTTGSHEMGVRNNCCDLQDGDICGELLFNGSRLPTSTRTVMTLTEVEGFILLPDDIKFIASHLNVFQRQKLQRTFRLYSQQWRSWAAFFIQAAWRKHCKRKLSKTRDNENIPQGTQLNLASTLYVSRFVSKALQNRRKDTADCSSSPDMSPPVPHKPADLEFAKAEA.

The Cytoplasmic segment spans residues 1 to 43 (MNHRRSKFARIDSMGVDGKLKSVRGRLKKVYGKMKTLENWRKT). A helical transmembrane segment spans residues 44–64 (VLLACVVALAIDPLFLFIPLI). The Extracellular portion of the chain corresponds to 65–76 (DSQRFCFTFDKT). The chain crosses the membrane as a helical span at residues 77 to 97 (LVAVVCVIRTFIDTFYVIHII). The Cytoplasmic portion of the chain corresponds to 98-128 (YYLITETIAPRSQASLRGEIVVHSKATLKTR). Residues 129 to 149 (LLFHFIVDIISVLPIPQVVVL) traverse the membrane as a helical segment. The Extracellular portion of the chain corresponds to 150 to 162 (TLIPLSASLVSER). A helical membrane pass occupies residues 163-183 (ILKWIILSQYVPRIIRMYPLY). Residues 184–200 (KEVTRAFGTVAESKWAG) lie on the Cytoplasmic side of the membrane. Residues 201–221 (AALNLFLYMLHSYVFGAFWYL) traverse the membrane as a helical segment. At 222–329 (SSIERKSKCW…QNLETSNSAG (108 aa)) the chain is on the extracellular side. The chain crosses the membrane as a helical span at residues 330–350 (EIFFAIIICVSGLLLFAVLIG). The Cytoplasmic segment spans residues 351–649 (NVQKYLQSST…ADLEFAKAEA (299 aa)). A nucleoside 3',5'-cyclic phosphate is bound by residues 436–559 (LNIM…TFRL) and E507. The segment at 545 to 560 (LNVFQRQKLQRTFRLY) is calmodulin-binding. Residues 565–594 (RSWAAFFIQAAWRKHCKRKLSKTRDNENIP) enclose the IQ domain. The tract at residues 618–649 (RRKDTADCSSSPDMSPPVPHKPADLEFAKAEA) is disordered. Basic and acidic residues predominate over residues 638–649 (KPADLEFAKAEA).

It belongs to the cyclic nucleotide-gated cation channel (TC 1.A.1.5) family. Homotetramer or heterotetramer.

It localises to the cell membrane. Probable cyclic nucleotide-gated ion channel. The chain is Probable cyclic nucleotide-gated ion channel 12 (CNGC12) from Arabidopsis thaliana (Mouse-ear cress).